The chain runs to 317 residues: Methionyl-tRNA formyltransferase (317 aa).

112–115 (SLLP) serves as a coordination point for (6S)-5,6,7,8-tetrahydrofolate.

Belongs to the Fmt family.

The enzyme catalyses L-methionyl-tRNA(fMet) + (6R)-10-formyltetrahydrofolate = N-formyl-L-methionyl-tRNA(fMet) + (6S)-5,6,7,8-tetrahydrofolate + H(+). Functionally, attaches a formyl group to the free amino group of methionyl-tRNA(fMet). The formyl group appears to play a dual role in the initiator identity of N-formylmethionyl-tRNA by promoting its recognition by IF2 and preventing the misappropriation of this tRNA by the elongation apparatus. This Mycoplasma mycoides subsp. mycoides SC (strain CCUG 32753 / NCTC 10114 / PG1) protein is Methionyl-tRNA formyltransferase.